Here is a 624-residue protein sequence, read N- to C-terminus: DNA mismatch repair protein MutL (624 aa).

The segment at 416 to 436 (LTPSVDQPDTGDGENPVAPEK) is disordered.

This sequence belongs to the DNA mismatch repair MutL/HexB family.

Its function is as follows. This protein is involved in the repair of mismatches in DNA. It is required for dam-dependent methyl-directed DNA mismatch repair. May act as a 'molecular matchmaker', a protein that promotes the formation of a stable complex between two or more DNA-binding proteins in an ATP-dependent manner without itself being part of a final effector complex. This Chlorobaculum tepidum (strain ATCC 49652 / DSM 12025 / NBRC 103806 / TLS) (Chlorobium tepidum) protein is DNA mismatch repair protein MutL.